A 902-amino-acid polypeptide reads, in one-letter code: MDTSRTSLFLCSVLYSLQLVGSARPGKQHRSCPTPCECEQDGMLVRVDCSDRGLTGLPRNISIFTSYLDLSMNNITKLPSNALHNLHFLEELRLAGNDLTYIPKGAFAGLGSLKVLMLQNNLLRQVPSEALQNLRSLQSLRLDANHISYVPPSSFNGLFSLRHLWLDDNSLTEIPVRALESLSALQAMTLALNKIHHIPDYAFGNLSSLVVLHLHNNRIYSLGKKCFDGLHSLETLDLNYNNLDEFPAAIKTLKNLKELGFHSNNIKSIPEQAFIGNPSLITTHFYDNPIQHVGRSAFQHLPELRTLILNGASQITEFPDLTGTTSLESLTLTGAQLVYLPSAVCNQLPNLKVIDLSYNHIKDLPSFSGCQRLQKIDLRHNEVYEIRFTTFQQLVGLRSLDLAWNKIAVIHPSSFSSLPSLIKLDLSSNHLTSFPVTGLHGLTHLKLTGNSALQDLIPSEHFPKLRVMEMPYAYQCCAFAVCENLKHSGQMNKDENSSADDFYRKDIGLLHLQDDRDFEDFLLDFEEDVKVLHSVQCTPSAGPFKPCDHLFGSWLTRIGVWLIVLLSFVCNALVIATVFRPLSYVPSIKLLIGLIAIINTLMGLSSGVLATVDALTFGNFAQYGAWWESGVGCQITGFLSVFAAETSVFLLTVAALERGFSIKCTTKFETKSSFLSVKLSIVFCFLLSIIIAVSPLMSGSTYGTSPFCFPLLFGDPSSMVFMVALVLLNSLCFLVMTVAYTKLYCSLEKGELENVWDCSMVKHIALLLFTNCILYCPVAFLSFSSLLNLTFISPEVNKSILLLIIPLPACLNPLLYILFNPHFKEDIGSLKNGDMLWSRSRHTSFASVSSEDAEKQSCDSTQALVTFASSSISFDLPATSSSSSYQMSNNYKLSAVAFVPCH.

Positions 1-22 (MDTSRTSLFLCSVLYSLQLVGS) are cleaved as a signal peptide. Over 23 to 557 (ARPGKQHRSC…DHLFGSWLTR (535 aa)) the chain is Extracellular. Cystine bridges form between Cys32–Cys38 and Cys36–Cys49. The LRRNT domain maps to 32-61 (CPTPCECEQDGMLVRVDCSDRGLTGLPRNI). LRR repeat units lie at residues 41–61 (DGML…PRNI), 62–85 (SIFT…ALHN), 86–109 (LHFL…AFAG), 111–133 (GSLK…ALQN), 134–157 (LRSL…SFNG), 159–181 (FSLR…ALES), 182–205 (LSAL…AFGN), 207–229 (SSLV…CFDG), 230–253 (LHSL…IKTL), 254–276 (KNLK…AFIG), 278–300 (PSLI…AFQH), 301–324 (LPEL…LTGT), 325–347 (TSLE…VCNQ), 348–372 (LPNL…GCQR), 374–393 (QKID…TFQQ), 394–417 (LVGL…SFSS), and 418–441 (LPSL…GLHG). N-linked (GlcNAc...) asparagine glycosylation is found at Asn60 and Asn74. Asn205 carries N-linked (GlcNAc...) asparagine glycosylation. Cys345 and Cys370 are disulfide-bonded. A disulfide bond links Cys476 and Cys537. Asn496 carries an N-linked (GlcNAc...) asparagine glycan. The chain crosses the membrane as a helical span at residues 558–578 (IGVWLIVLLSFVCNALVIATV). The Cytoplasmic portion of the chain corresponds to 579–589 (FRPLSYVPSIK). Residues 590–610 (LLIGLIAIINTLMGLSSGVLA) traverse the membrane as a helical segment. Residues 598–619 (INTLMGLSSGVLATVDALTFGN) form an LRR 18 repeat. Residues 611–634 (TVDALTFGNFAQYGAWWESGVGCQ) lie on the Extracellular side of the membrane. A disulfide bridge links Cys633 with Cys708. A helical transmembrane segment spans residues 635 to 655 (ITGFLSVFAAETSVFLLTVAA). At 656–678 (LERGFSIKCTTKFETKSSFLSVK) the chain is on the cytoplasmic side. A helical membrane pass occupies residues 679-699 (LSIVFCFLLSIIIAVSPLMSG). Residues 700-718 (STYGTSPFCFPLLFGDPSS) lie on the Extracellular side of the membrane. A helical transmembrane segment spans residues 719–739 (MVFMVALVLLNSLCFLVMTVA). Topologically, residues 740 to 763 (YTKLYCSLEKGELENVWDCSMVKH) are cytoplasmic. Residues 764–784 (IALLLFTNCILYCPVAFLSFS) form a helical membrane-spanning segment. Over 785–798 (SLLNLTFISPEVNK) the chain is Extracellular. Asn788 and Asn797 each carry an N-linked (GlcNAc...) asparagine glycan. The helical transmembrane segment at 799 to 819 (SILLLIIPLPACLNPLLYILF) threads the bilayer. The Cytoplasmic portion of the chain corresponds to 820 to 902 (NPHFKEDIGS…LSAVAFVPCH (83 aa)).

This sequence belongs to the G-protein coupled receptor 1 family. As to expression, expressed in the developing epithelial stem cells of the intestine.

It localises to the cell membrane. Its subcellular location is the golgi apparatus. The protein localises to the trans-Golgi network membrane. Its function is as follows. Receptor for R-spondins that potentiates the canonical Wnt signaling pathway and acts as a stem cell marker of the intestinal epithelium and the hair follicle. Upon binding to R-spondins (RSPO1, RSPO2, RSPO3 or RSPO4), associates with phosphorylated LRP6 and frizzled receptors that are activated by extracellular Wnt receptors, triggering the canonical Wnt signaling pathway to increase expression of target genes. In contrast to classical G-protein coupled receptors, does not activate heterotrimeric G-proteins to transduce the signal. Involved in the development and/or maintenance of the adult intestinal stem cells during postembryonic development. In Xenopus laevis (African clawed frog), this protein is Leucine-rich repeat-containing G-protein coupled receptor 5A (lgr5-a).